A 309-amino-acid polypeptide reads, in one-letter code: DNA-directed RNA polymerase subunit alpha (309 aa).

The tract at residues 1–225 (MFQVQCLESA…SLFKLVNSAD (225 aa)) is alpha N-terminal domain (alpha-NTD). Residues 237 to 309 (IVQVSQTDVT…LHERFNLTLN (73 aa)) are alpha C-terminal domain (alpha-CTD).

The protein belongs to the RNA polymerase alpha chain family. In terms of assembly, in plastids the minimal PEP RNA polymerase catalytic core is composed of four subunits: alpha, beta, beta', and beta''. When a (nuclear-encoded) sigma factor is associated with the core the holoenzyme is formed, which can initiate transcription.

It localises to the plastid. Its subcellular location is the chloroplast. The catalysed reaction is RNA(n) + a ribonucleoside 5'-triphosphate = RNA(n+1) + diphosphate. In terms of biological role, DNA-dependent RNA polymerase catalyzes the transcription of DNA into RNA using the four ribonucleoside triphosphates as substrates. The polypeptide is DNA-directed RNA polymerase subunit alpha (Emiliania huxleyi (Coccolithophore)).